The primary structure comprises 252 residues: Protein IL-40 (252 aa).

Positions methionine 1–serine 18 are cleaved as a signal peptide. 2 N-linked (GlcNAc...) asparagine glycosylation sites follow: asparagine 82 and asparagine 177.

As to expression, expressed in bone marrow, spleen and lymph node.

The protein localises to the secreted. In terms of biological role, probable B cell-associated cytokine that plays a role in the regulation of humoral immune responses. Involved in lymphocyte B cell development and immunoglobulin/IgA production. The sequence is that of Protein IL-40 from Mus musculus (Mouse).